The sequence spans 635 residues: Sodium- and chloride-dependent creatine transporter 1 (635 aa).

Residues 1–27 (MAKKSAENGIYSVSGDEKKGPLIVSGP) are disordered. Topologically, residues 1-60 (MAKKSAENGIYSVSGDEKKGPLIVSGPDGAPAKGDGPAGLGAPGGRLAVPPRETWTRQMD) are cytoplasmic. A helical transmembrane segment spans residues 61-81 (FIMSCVGFAVGLGNVWRFPYL). Topologically, residues 82–87 (CYKNGG) are extracellular. The helical transmembrane segment at 88–108 (GVFLIPYVLIALVGGIPIFFL) threads the bilayer. Over 109–138 (EISLGQFMKAGSINVWNICPLFKGLGYASM) the chain is Cytoplasmic. The helical transmembrane segment at 139 to 159 (VIVFYCNTYYIMVLAWGFYYL) threads the bilayer. At 160–230 (VKSFTTTLPW…LSTGLEVPGA (71 aa)) the chain is on the extracellular side. Asn192 and Asn197 each carry an N-linked (GlcNAc...) asparagine glycan. Residues 231–251 (LNWEVTLCLLACWVLVYFCVW) traverse the membrane as a helical segment. The Cytoplasmic portion of the chain corresponds to 252-269 (KGVKSTGKIVYFTATFPY). The helical transmembrane segment at 270-290 (VVLVVLLVRGVLLPGALDGII) threads the bilayer. The Extracellular segment spans residues 291 to 304 (YYLKPDWSKLGSPQ). The chain crosses the membrane as a helical span at residues 305-325 (VWIDAGTQIFFSYAIGLGALT). Topologically, residues 326–341 (ALGSYNRFNNNCYKDA) are cytoplasmic. The chain crosses the membrane as a helical span at residues 342-362 (IILALINSGTSFFAGFVVFSI). At 363–394 (LGFMATEQGVHISKVAESGPGLAFIAYPRAVT) the chain is on the extracellular side. The helical transmembrane segment at 395 to 415 (LMPVAPLWAALFFFMLLLLGL) threads the bilayer. The Cytoplasmic segment spans residues 416 to 444 (DSQFVGVEGFITGLLDLLPASYYFRFQRE). A helical membrane pass occupies residues 445 to 465 (ISVALCCALCFVIDLSMVTDG). Topologically, residues 466-479 (GMYVFQLFDYYSAS) are extracellular. A helical membrane pass occupies residues 480–500 (GTTLLWQAFWECVVVAWVYGA). The Cytoplasmic segment spans residues 501–520 (DRFMDDIACMIGYRPCPWMK). A helical membrane pass occupies residues 521 to 541 (WCWSFFTPLVCMGIFIFNIVY). Topologically, residues 542 to 560 (YEPLVYNNTYVYPWWGEAM) are extracellular. An N-linked (GlcNAc...) asparagine glycan is attached at Asn548. The helical transmembrane segment at 561–581 (GWAFALSSMLCVPLHLLGCLL) threads the bilayer. Topologically, residues 582-635 (RAKGTMAERWQHLTQPIWGLHHLEYRAQDADVRGLTTLTPVSESSKVVVVESVM) are cytoplasmic. Phosphothreonine is present on residues Thr617 and Thr620. A Phosphoserine modification is found at Ser623.

Belongs to the sodium:neurotransmitter symporter (SNF) (TC 2.A.22) family. SLC6A8 subfamily. Post-translationally, glycosylated. Brain. Highly expressed in brain capillaries branching in all cortical layers and moderately expressed in neuronal perikarya (at protein level).

It localises to the cell membrane. Its subcellular location is the apical cell membrane. The catalysed reaction is creatine(out) + chloride(out) + 2 Na(+)(out) = creatine(in) + chloride(in) + 2 Na(+)(in). Its function is as follows. Creatine:sodium symporter which mediates the uptake of creatine. Plays an important role in supplying creatine to the brain via the blood-brain barrier. The protein is Sodium- and chloride-dependent creatine transporter 1 (Slc6a8) of Mus musculus (Mouse).